A 447-amino-acid chain; its full sequence is MPEIVNIISREIVDSRGNPTVESEVHTKSGFFGLASVPSGSSLGSQEALELRDNDHARFFGKGVKKSVNIINSTIRVSLLNIDVTKQSVIDEIMINLDGTNNKSQLGANSILSVSLAIAKAAASFMGMPLYQYIARLYGMSSNVYSMPVPMMNIMNGGKHADNNLDIQEFMIVPVGAKNIKQAIQMGSEISYSLKNVLNNLGISIALGDEGGYAPNLKSHSYALELINKSIEQSNYVLGKDVVLAIDCAASELFEVSTGKYVINSEKVSFTSEEFVDYLSSLARKYCIFSIEDGQSEHDWHGFSYLTKKLGDIMQLVGDDLFVTNPNLLKMGINKNVANSILVKPNQIGSLTETLNVIKLAKESGYSTIVSHRSGETEDTSIADIAVGTSAGQIKTGPVRCSERTSKYNRLIRIEEFLKDNSKFYGVNEIKNLSAQLWMYQNKNMNI.

Glutamine 168 is a (2R)-2-phosphoglycerate binding site. The Proton donor role is filled by glutamate 210. Positions 247, 292, and 319 each coordinate Mg(2+). Lysine 344, arginine 373, serine 374, and lysine 395 together coordinate (2R)-2-phosphoglycerate. Lysine 344 serves as the catalytic Proton acceptor.

The protein belongs to the enolase family. Component of the RNA degradosome, a multiprotein complex involved in RNA processing and mRNA degradation. Requires Mg(2+) as cofactor.

The protein resides in the cytoplasm. It is found in the secreted. The protein localises to the cell surface. It catalyses the reaction (2R)-2-phosphoglycerate = phosphoenolpyruvate + H2O. The protein operates within carbohydrate degradation; glycolysis; pyruvate from D-glyceraldehyde 3-phosphate: step 4/5. Its function is as follows. Catalyzes the reversible conversion of 2-phosphoglycerate (2-PG) into phosphoenolpyruvate (PEP). It is essential for the degradation of carbohydrates via glycolysis. The sequence is that of Enolase from Blochmanniella floridana.